The chain runs to 228 residues: Glycerol-3-phosphate acyltransferase (228 aa).

6 helical membrane-spanning segments follow: residues 1–21, 56–76, 104–124, 136–156, 161–181, and 183–203; these read MINWLVLNAVILIVAYLLGAT, VPALVVLVIDIFKGALAIALV, MVIIAGLIAIVGHTKSIWIGF, ILLAISWVVGLGTLSVFIVVL, IVSLSSIIAAISVSGLMFFTG, and PLPYQIFAITGGIYVIWRHIS.

It belongs to the PlsY family. Probably interacts with PlsX.

It is found in the cell inner membrane. It catalyses the reaction an acyl phosphate + sn-glycerol 3-phosphate = a 1-acyl-sn-glycero-3-phosphate + phosphate. It participates in lipid metabolism; phospholipid metabolism. Functionally, catalyzes the transfer of an acyl group from acyl-phosphate (acyl-PO(4)) to glycerol-3-phosphate (G3P) to form lysophosphatidic acid (LPA). This enzyme utilizes acyl-phosphate as fatty acyl donor, but not acyl-CoA or acyl-ACP. The protein is Glycerol-3-phosphate acyltransferase of Trichodesmium erythraeum (strain IMS101).